The following is a 202-amino-acid chain: 3-isopropylmalate dehydratase small subunit 2 (202 aa).

This sequence belongs to the LeuD family. LeuD type 1 subfamily. As to quaternary structure, heterodimer of LeuC and LeuD.

It catalyses the reaction (2R,3S)-3-isopropylmalate = (2S)-2-isopropylmalate. The protein operates within amino-acid biosynthesis; L-leucine biosynthesis; L-leucine from 3-methyl-2-oxobutanoate: step 2/4. Functionally, catalyzes the isomerization between 2-isopropylmalate and 3-isopropylmalate, via the formation of 2-isopropylmaleate. This is 3-isopropylmalate dehydratase small subunit 2 from Bordetella parapertussis (strain 12822 / ATCC BAA-587 / NCTC 13253).